We begin with the raw amino-acid sequence, 120 residues long: NAD(P)H-quinone oxidoreductase subunit 3, chloroplastic (120 aa).

3 consecutive transmembrane segments (helical) span residues 9–29 (FFWA…LISG), 64–84 (MFAL…PWAM), and 88–108 (VLGV…IIGL).

It belongs to the complex I subunit 3 family. As to quaternary structure, NDH is composed of at least 16 different subunits, 5 of which are encoded in the nucleus.

Its subcellular location is the plastid. The protein resides in the chloroplast thylakoid membrane. The catalysed reaction is a plastoquinone + NADH + (n+1) H(+)(in) = a plastoquinol + NAD(+) + n H(+)(out). It catalyses the reaction a plastoquinone + NADPH + (n+1) H(+)(in) = a plastoquinol + NADP(+) + n H(+)(out). Functionally, NDH shuttles electrons from NAD(P)H:plastoquinone, via FMN and iron-sulfur (Fe-S) centers, to quinones in the photosynthetic chain and possibly in a chloroplast respiratory chain. The immediate electron acceptor for the enzyme in this species is believed to be plastoquinone. Couples the redox reaction to proton translocation, and thus conserves the redox energy in a proton gradient. The chain is NAD(P)H-quinone oxidoreductase subunit 3, chloroplastic from Nicotiana tabacum (Common tobacco).